We begin with the raw amino-acid sequence, 176 residues long: Ribosome maturation factor RimM (176 aa).

A PRC barrel domain is found at 103 to 176 (QNDEYYFYEI…KIVVKELEWI (74 aa)).

Belongs to the RimM family. As to quaternary structure, binds ribosomal protein uS19.

The protein resides in the cytoplasm. In terms of biological role, an accessory protein needed during the final step in the assembly of 30S ribosomal subunit, possibly for assembly of the head region. Essential for efficient processing of 16S rRNA. May be needed both before and after RbfA during the maturation of 16S rRNA. It has affinity for free ribosomal 30S subunits but not for 70S ribosomes. This is Ribosome maturation factor RimM from Thermotoga neapolitana (strain ATCC 49049 / DSM 4359 / NBRC 107923 / NS-E).